Consider the following 288-residue polypeptide: Elongation factor Ts (288 aa).

An involved in Mg(2+) ion dislocation from EF-Tu region spans residues 82 to 85 (TDFV).

The protein belongs to the EF-Ts family.

It is found in the cytoplasm. Functionally, associates with the EF-Tu.GDP complex and induces the exchange of GDP to GTP. It remains bound to the aminoacyl-tRNA.EF-Tu.GTP complex up to the GTP hydrolysis stage on the ribosome. This is Elongation factor Ts from Chlorobaculum tepidum (strain ATCC 49652 / DSM 12025 / NBRC 103806 / TLS) (Chlorobium tepidum).